Consider the following 114-residue polypeptide: Fluoride-specific ion channel FluC 1 (114 aa).

Helical transmembrane passes span 28–48, 56–76, and 91–111; these read VFPWATFIINITGALLLGFLH, ILLLLGTGFLGGYTTFSTFQV, and IIYLLLTVICGILAAYCGSWL. Residues G66 and T69 each coordinate Na(+).

It belongs to the fluoride channel Fluc/FEX (TC 1.A.43) family.

The protein resides in the cell membrane. It carries out the reaction fluoride(in) = fluoride(out). With respect to regulation, na(+) is not transported, but it plays an essential structural role and its presence is essential for fluoride channel function. Its function is as follows. Fluoride-specific ion channel. Important for reducing fluoride concentration in the cell, thus reducing its toxicity. The sequence is that of Fluoride-specific ion channel FluC 1 from Ligilactobacillus salivarius (strain UCC118) (Lactobacillus salivarius).